A 430-amino-acid chain; its full sequence is Xaa-Pro aminopeptidase (430 aa).

Asp254, Asp265, His348, Glu377, and Glu400 together coordinate Mn(2+).

It belongs to the peptidase M24B family. Homotetramer. It depends on Mn(2+) as a cofactor.

It carries out the reaction Release of any N-terminal amino acid, including proline, that is linked to proline, even from a dipeptide or tripeptide.. This is Xaa-Pro aminopeptidase (pepP) from Haemophilus influenzae (strain ATCC 51907 / DSM 11121 / KW20 / Rd).